Reading from the N-terminus, the 716-residue chain is Zinc finger CCCH domain-containing protein 30 (716 aa).

ANK repeat units lie at residues 90–120 (DYRT…DVNR) and 125–157 (DQTT…DLNL). The disordered stretch occupies residues 201 to 231 (VTNVPNRSSSPCHSPTGENGGSGSGSPLGSP). Positions 203–213 (NVPNRSSSPCH) are enriched in polar residues. C3H1-type zinc fingers lie at residues 306 to 328 (PCPD…HGVF) and 336 to 360 (QYRT…HTPE). A disordered region spans residues 521 to 562 (FQQQQQQQQSMLSPINTSFSSPKSVDHSLFSGGGRMSPRNVV). A compositionally biased stretch (polar residues) spans 530–543 (SMLSPINTSFSSPK). Ser-566 carries the post-translational modification Phosphoserine. A compositionally biased stretch (low complexity) spans 583–594 (QQQQQQQQQQHQ). Disordered stretches follow at residues 583–638 (QQQQ…MSSE) and 667–692 (PAEA…PVEP). Polar residues predominate over residues 605-630 (TNSSPIVGSPVNNNTWSSKWGSSNGQ).

In Arabidopsis thaliana (Mouse-ear cress), this protein is Zinc finger CCCH domain-containing protein 30.